The primary structure comprises 158 residues: Endoribonuclease YbeY (158 aa).

Residues H121, H125, and H131 each contribute to the Zn(2+) site.

Belongs to the endoribonuclease YbeY family. Zn(2+) serves as cofactor.

It localises to the cytoplasm. Its function is as follows. Single strand-specific metallo-endoribonuclease involved in late-stage 70S ribosome quality control and in maturation of the 3' terminus of the 16S rRNA. This Exiguobacterium sibiricum (strain DSM 17290 / CCUG 55495 / CIP 109462 / JCM 13490 / 255-15) protein is Endoribonuclease YbeY.